Reading from the N-terminus, the 224-residue chain is Large ribosomal subunit protein uL1m (224 aa).

Belongs to the universal ribosomal protein uL1 family.

Its subcellular location is the mitochondrion. This is Large ribosomal subunit protein uL1m (RPL1) from Reclinomonas americana.